Here is a 430-residue protein sequence, read N- to C-terminus: Glutamate-1-semialdehyde 2,1-aminomutase (430 aa).

Lysine 268 bears the N6-(pyridoxal phosphate)lysine mark.

This sequence belongs to the class-III pyridoxal-phosphate-dependent aminotransferase family. HemL subfamily. Pyridoxal 5'-phosphate is required as a cofactor.

It localises to the cytoplasm. It carries out the reaction (S)-4-amino-5-oxopentanoate = 5-aminolevulinate. Its pathway is porphyrin-containing compound metabolism; protoporphyrin-IX biosynthesis; 5-aminolevulinate from L-glutamyl-tRNA(Glu): step 2/2. This is Glutamate-1-semialdehyde 2,1-aminomutase from Methanopyrus kandleri (strain AV19 / DSM 6324 / JCM 9639 / NBRC 100938).